The sequence spans 133 residues: Protein OPG104 (133 aa).

Topologically, residues 1–111 (MTDEQIYAFC…RYLNQEIRYP (111 aa)) are virion surface. The chain crosses the membrane as a helical; Signal-anchor span at residues 112–132 (IIDIKWLPIGLLALAILILAF).

It belongs to the orthopoxvirus OPG104 family. Part of a stable entry-fusion complex (EFC) which is at least composed of proteins OPG143, OPG147, OPG155, OPG086, OPG094, OPG107, OPG104, and OPG099. Formation of the viral membrane is necessary for the assembly of the complex.

The protein resides in the virion membrane. Envelope protein part of the entry-fusion complex responsible for the virus membrane fusion with host cell membrane during virus entry. Also plays a role in cell-cell fusion (syncytium formation). In Variola virus (isolate Human/India/Ind3/1967) (VARV), this protein is Protein OPG104 (OPG104).